The following is a 200-amino-acid chain: MQLNVNGAQAIEVSDRTFGGEFNETLVHQAVVAYMAGGRQGSKQQKTRSDVSGGGKRPWRQKGTGRARAGTTRGPIWRGGGVTFAARPQNHEQKLNKKMYRAALRSILAELVRSERLVVVEDFAVDAPKTKALASKLNGMGLSDVLIVSDAVDQNLYLAARNLPHVDVRDVQGSDPVSLIAYDKVLITVSAVKKFEELLG.

Positions 38–80 (GRQGSKQQKTRSDVSGGGKRPWRQKGTGRARAGTTRGPIWRGG) are disordered.

The protein belongs to the universal ribosomal protein uL4 family. As to quaternary structure, part of the 50S ribosomal subunit.

In terms of biological role, one of the primary rRNA binding proteins, this protein initially binds near the 5'-end of the 23S rRNA. It is important during the early stages of 50S assembly. It makes multiple contacts with different domains of the 23S rRNA in the assembled 50S subunit and ribosome. Forms part of the polypeptide exit tunnel. In Stutzerimonas stutzeri (strain A1501) (Pseudomonas stutzeri), this protein is Large ribosomal subunit protein uL4.